The primary structure comprises 432 residues: UDP-N-acetylglucosamine 1-carboxyvinyltransferase (432 aa).

22 to 23 (KN) contributes to the phosphoenolpyruvate binding site. Arg-92 serves as a coordination point for UDP-N-acetyl-alpha-D-glucosamine. The active-site Proton donor is Cys-116. Cys-116 carries the 2-(S-cysteinyl)pyruvic acid O-phosphothioketal modification. Residues 121–125 (RPVDQ), Asp-307, and Ile-329 each bind UDP-N-acetyl-alpha-D-glucosamine.

This sequence belongs to the EPSP synthase family. MurA subfamily.

It localises to the cytoplasm. It carries out the reaction phosphoenolpyruvate + UDP-N-acetyl-alpha-D-glucosamine = UDP-N-acetyl-3-O-(1-carboxyvinyl)-alpha-D-glucosamine + phosphate. It participates in cell wall biogenesis; peptidoglycan biosynthesis. Cell wall formation. Adds enolpyruvyl to UDP-N-acetylglucosamine. The sequence is that of UDP-N-acetylglucosamine 1-carboxyvinyltransferase from Psychrobacter sp. (strain PRwf-1).